Here is a 204-residue protein sequence, read N- to C-terminus: Tat proofreading chaperone DmsD (204 aa).

It belongs to the TorD/DmsD family. DmsD subfamily.

In terms of biological role, required for biogenesis/assembly of DMSO reductase, but not for the interaction of the DmsA signal peptide with the Tat system. May be part of a chaperone cascade complex that facilitates a folding-maturation pathway for the substrate protein. This chain is Tat proofreading chaperone DmsD, found in Escherichia coli O157:H7.